A 624-amino-acid polypeptide reads, in one-letter code: Leucine-rich repeat and IQ domain-containing protein 3 (624 aa).

3 LRR repeats span residues 51-72 (SLRV…QSCI), 73-94 (KLIK…KFWN), and 98-119 (NLKL…CVLS). The LRRCT domain occupies 132–179 (CPVSLKKGYRHVLVNSIWPLKALDHHVISDEEIIQNWHLPERFKACNH). In terms of domain architecture, IQ spans 215–244 (HNSPVLIVQRWIRGFLVRKNLSPVFFHKKK). Positions 553-614 (KQKLKAEKYR…TKVAIVKTNL (62 aa)) form a coiled coil.

This chain is Leucine-rich repeat and IQ domain-containing protein 3 (LRRIQ3), found in Homo sapiens (Human).